Consider the following 176-residue polypeptide: MDSQVRQNFHRDCEAAINRMVNMELYASYTYLSMAFYFDRDDIALHNVAKFFKEQSHEEREHAEKLMKDQNKRGGRIVLQDVKKPERDEWGNTLEAMQAALQLEKTVNQALLDLHKVGSDKVDPHLCDFLETEYLEEQVKSIKQLGDYITNLKRLGLPQNGMGEYLFDKHTMGESS.

Residues 7-156 (QNFHRDCEAA…DYITNLKRLG (150 aa)) enclose the Ferritin-like diiron domain. Glutamate 24, glutamate 58, glutamate 59, histidine 62, glutamate 104, and glutamine 138 together coordinate Fe cation.

It belongs to the ferritin family. Oligomer of 24 subunits. The functional molecule is roughly spherical and contains a central cavity into which the polymeric mineral iron core is deposited.

The enzyme catalyses 4 Fe(2+) + O2 + 4 H(+) = 4 Fe(3+) + 2 H2O. In terms of biological role, stores iron in a soluble, non-toxic, readily available form. Important for iron homeostasis. Has ferroxidase activity. Iron is taken up in the ferrous form and deposited as ferric hydroxides after oxidation. The sequence is that of Ferritin, higher subunit from Aquarana catesbeiana (American bullfrog).